The following is a 107-amino-acid chain: Insulin-like peptide 6 (107 aa).

The N-terminal stretch at methionine 1–alanine 33 is a signal peptide. 3 cysteine pairs are disulfide-bonded: cysteine 48/cysteine 91, cysteine 60/cysteine 105, and cysteine 90/cysteine 96. A propeptide spans leucine 67–glycine 76 (connecting peptide).

It belongs to the insulin family. In terms of assembly, heterodimer of a B chain and an A chain linked by two disulfide bonds. Expressed at a low level in the larval gut.

It localises to the secreted. In terms of biological role, possible ligand of InR/insulin-like receptor. The polypeptide is Insulin-like peptide 6 (Drosophila melanogaster (Fruit fly)).